The chain runs to 796 residues: Lon protease (796 aa).

In terms of domain architecture, Lon N-terminal spans 19-213 (LPVVVTRGIF…LLKELIINRP (195 aa)). An ATP-binding site is contributed by 376–383 (GPPGVGKT). Residues 612–793 (ESQVGVVTGL…EDVYEIIFKN (182 aa)) enclose the Lon proteolytic domain. Residues Ser-699 and Lys-742 contribute to the active site.

It belongs to the peptidase S16 family. In terms of assembly, homohexamer. Organized in a ring with a central cavity.

Its subcellular location is the cytoplasm. The catalysed reaction is Hydrolysis of proteins in presence of ATP.. In terms of biological role, ATP-dependent serine protease that mediates the selective degradation of mutant and abnormal proteins as well as certain short-lived regulatory proteins. Required for cellular homeostasis and for survival from DNA damage and developmental changes induced by stress. Degrades polypeptides processively to yield small peptide fragments that are 5 to 10 amino acids long. Binds to DNA in a double-stranded, site-specific manner. In Mycoplasma mycoides subsp. mycoides SC (strain CCUG 32753 / NCTC 10114 / PG1), this protein is Lon protease.